The sequence spans 342 residues: Ion-translocating oxidoreductase complex subunit D (342 aa).

A run of 3 helical transmembrane segments spans residues 42-62 (GSVINVLWAVIVALVSEALFL), 68-90 (NIAFYLKDYSAVVTAVLLGLALP), and 124-144 (AMVGYVLLLISFPVAMTQWLA). Threonine 171 bears the FMN phosphoryl threonine mark. A run of 5 helical transmembrane segments spans residues 200 to 220 (FAGLGWEWVNLAFLLGGLYLI), 227 to 247 (WHIPAGFLAGLGLPALLAWLI), 252 to 272 (FADPLFQLFSGGAMLGAFFIA), 286 to 306 (LVYALLIGVLIWVIRTFGGYP), and 308 to 328 (AVAFSVLLLNLSAPFIDYYTQ).

The protein belongs to the NqrB/RnfD family. The complex is composed of six subunits: RnfA, RnfB, RnfC, RnfD, RnfE and RnfG. It depends on FMN as a cofactor.

The protein resides in the cell inner membrane. In terms of biological role, part of a membrane-bound complex that couples electron transfer with translocation of ions across the membrane. This Alcanivorax borkumensis (strain ATCC 700651 / DSM 11573 / NCIMB 13689 / SK2) protein is Ion-translocating oxidoreductase complex subunit D.